We begin with the raw amino-acid sequence, 448 residues long: Elongation factor 1-alpha (448 aa).

The region spanning 5–230 (KIHISIVVIG…DQINEPKRPS (226 aa)) is the tr-type G domain. The segment at 14–21 (GHVDSGKS) is G1. 14-21 (GHVDSGKS) is a binding site for GTP. Lys55 carries the N6,N6-dimethyllysine modification. The G2 stretch occupies residues 70–74 (GITID). The residue at position 79 (Lys79) is an N6,N6,N6-trimethyllysine. A G3 region spans residues 91–94 (DAPG). GTP is bound by residues 91–95 (DAPGH) and 153–156 (NKMD). The G4 stretch occupies residues 153 to 156 (NKMD). At Lys187 the chain carries N6,N6,N6-trimethyllysine. Positions 194 to 196 (SGF) are G5. N6-methyllysine is present on Lys261. Glu289 carries the post-translational modification 5-glutamyl glycerylphosphorylethanolamine. Position 306 is an N6,N6,N6-trimethyllysine (Lys306). Glu362 bears the 5-glutamyl glycerylphosphorylethanolamine mark. An N6,N6,N6-trimethyllysine modification is found at Lys396.

The protein belongs to the TRAFAC class translation factor GTPase superfamily. Classic translation factor GTPase family. EF-Tu/EF-1A subfamily.

Its subcellular location is the cytoplasm. Functionally, this protein promotes the GTP-dependent binding of aminoacyl-tRNA to the A-site of ribosomes during protein biosynthesis. The sequence is that of Elongation factor 1-alpha from Solanum lycopersicum (Tomato).